Reading from the N-terminus, the 356-residue chain is tRNA N6-adenosine threonylcarbamoyltransferase (356 aa).

Residues His-115 and His-119 each coordinate Fe cation. Substrate is bound by residues 138-142 (LVSGG), Asp-171, Gly-184, and Asn-283. Asp-311 serves as a coordination point for Fe cation.

This sequence belongs to the KAE1 / TsaD family. It depends on Fe(2+) as a cofactor.

Its subcellular location is the cytoplasm. The catalysed reaction is L-threonylcarbamoyladenylate + adenosine(37) in tRNA = N(6)-L-threonylcarbamoyladenosine(37) in tRNA + AMP + H(+). Functionally, required for the formation of a threonylcarbamoyl group on adenosine at position 37 (t(6)A37) in tRNAs that read codons beginning with adenine. Is involved in the transfer of the threonylcarbamoyl moiety of threonylcarbamoyl-AMP (TC-AMP) to the N6 group of A37, together with TsaE and TsaB. TsaD likely plays a direct catalytic role in this reaction. In Prochlorococcus marinus (strain MIT 9312), this protein is tRNA N6-adenosine threonylcarbamoyltransferase.